The sequence spans 319 residues: Tetrahydromethanopterin S-methyltransferase subunit H (319 aa).

Belongs to the MtrH family. As to quaternary structure, the complex is composed of 8 subunits; MtrA, MtrB, MtrC, MtrD, MtrE, MtrF, MtrG and MtrH.

It carries out the reaction 5-methyl-5,6,7,8-tetrahydromethanopterin + coenzyme M + 2 Na(+)(in) = 5,6,7,8-tetrahydromethanopterin + methyl-coenzyme M + 2 Na(+)(out). Its pathway is one-carbon metabolism; methanogenesis from CO(2); methyl-coenzyme M from 5,10-methylene-5,6,7,8-tetrahydromethanopterin: step 2/2. Functionally, part of a complex that catalyzes the formation of methyl-coenzyme M and tetrahydromethanopterin from coenzyme M and methyl-tetrahydromethanopterin. This is an energy-conserving, sodium-ion translocating step. MtrH catalyzes the transfer of the methyl group from methyl-tetrahydromethanopterin to the corrinoid prosthetic group of MtrA. This is Tetrahydromethanopterin S-methyltransferase subunit H from Methanococcus aeolicus (strain ATCC BAA-1280 / DSM 17508 / OCM 812 / Nankai-3).